Here is a 344-residue protein sequence, read N- to C-terminus: Coproporphyrin III ferrochelatase (344 aa).

Fe-coproporphyrin III is bound at residue Ser-52. A [2Fe-2S] cluster-binding site is contributed by Cys-113. Residue Tyr-116 coordinates Fe-coproporphyrin III. The Fe(2+) site is built by His-172 and Glu-255. 3 residues coordinate [2Fe-2S] cluster: Cys-316, Cys-325, and Cys-330.

Belongs to the ferrochelatase family. It depends on [2Fe-2S] cluster as a cofactor.

It localises to the cytoplasm. The enzyme catalyses Fe-coproporphyrin III + 2 H(+) = coproporphyrin III + Fe(2+). Its pathway is porphyrin-containing compound metabolism; protoheme biosynthesis. In terms of biological role, involved in coproporphyrin-dependent heme b biosynthesis. Catalyzes the insertion of ferrous iron into coproporphyrin III to form Fe-coproporphyrin III. The polypeptide is Coproporphyrin III ferrochelatase (Mycobacterium bovis (strain ATCC BAA-935 / AF2122/97)).